Consider the following 632-residue polypeptide: Chaperone protein DnaK (632 aa).

Position 199 is a phosphothreonine; by autocatalysis (Thr199). Residues 597 to 611 are compositionally biased toward low complexity; that stretch reads AAQQAGQAEGQAAQE. A disordered region spans residues 597–632; the sequence is AAQQAGQAEGQAAQEPSQSTGNAQAEATDAEYEEVK. Residues 612–621 are compositionally biased toward polar residues; sequence PSQSTGNAQA.

It belongs to the heat shock protein 70 family.

Its function is as follows. Acts as a chaperone. This is Chaperone protein DnaK from Amoebophilus asiaticus (strain 5a2).